The chain runs to 268 residues: Probable chemotaxis protein methyltransferase (268 aa).

The 262-residue stretch at 1 to 262 (MIYSDAGIFL…GITTYRYTTK (262 aa)) folds into the CheR-type methyltransferase domain. S-adenosyl-L-methionine-binding positions include N60, T62, R66, E104, D130, 188–189 (NL), and 205–206 (RN).

It carries out the reaction L-glutamyl-[protein] + S-adenosyl-L-methionine = [protein]-L-glutamate 5-O-methyl ester + S-adenosyl-L-homocysteine. Its function is as follows. Methylation of the membrane-bound methyl-accepting chemotaxis proteins (MCP) to form gamma-glutamyl methyl ester residues in MCP. This Rhizobium etli (strain ATCC 51251 / DSM 11541 / JCM 21823 / NBRC 15573 / CFN 42) protein is Probable chemotaxis protein methyltransferase (cheRch1).